We begin with the raw amino-acid sequence, 94 residues long: Enhancer of yellow 2 transcription factor (94 aa).

Belongs to the ENY2 family. In terms of assembly, component of the nuclear pore complex (NPC)-associated AMEX complex (anchoring and mRNA export complex), composed of at least e(y)2 and xmas-2. Component of the SAGA transcription coactivator-HAT complexes, at least composed of Ada2b, e(y)2, Pcaf/Gcn5, Taf10 and Nipped-A/Trrap. Within the SAGA complex, e(y)2, Sgf11, and not/nonstop form an additional subcomplex of SAGA called the DUB module (deubiquitination module). Component of the THO complex, composed of at least e(y)2, HPR1, THO2, THOC5, THOC6 and THOC7. Interacts with e(y)1. Interacts with su(Hw) (via zinc fingers). Interacts with xmas-2; required for localization to the nuclear periphery. Interacts with the nuclear pore complex (NPC).

The protein resides in the nucleus. The protein localises to the nucleoplasm. It is found in the cytoplasm. Its function is as follows. Involved in mRNA export coupled transcription activation by association with both the AMEX and the SAGA complexes. The SAGA complex is a multiprotein complex that activates transcription by remodeling chromatin and mediating histone acetylation and deubiquitination. Within the SAGA complex, participates in a subcomplex that specifically deubiquitinates histone H2B. The SAGA complex is recruited to specific gene promoters by activators, where it is required for transcription. Required for nuclear receptor-mediated transactivation. Involved in transcription elongation by recruiting the THO complex onto nascent mRNA. The AMEX complex functions in docking export-competent ribonucleoprotein particles (mRNPs) to the nuclear entrance of the nuclear pore complex (nuclear basket). AMEX participates in mRNA export and accurate chromatin positioning in the nucleus by tethering genes to the nuclear periphery. The protein is Enhancer of yellow 2 transcription factor of Drosophila mojavensis (Fruit fly).